A 277-amino-acid chain; its full sequence is Probable endonuclease 4 (277 aa).

His-70, His-108, Glu-145, Asp-178, His-181, His-212, Asp-225, His-227, and Glu-257 together coordinate Zn(2+).

This sequence belongs to the AP endonuclease 2 family. Zn(2+) serves as cofactor.

It carries out the reaction Endonucleolytic cleavage to 5'-phosphooligonucleotide end-products.. In terms of biological role, endonuclease IV plays a role in DNA repair. It cleaves phosphodiester bonds at apurinic or apyrimidinic (AP) sites, generating a 3'-hydroxyl group and a 5'-terminal sugar phosphate. This Mycoplasmopsis pulmonis (strain UAB CTIP) (Mycoplasma pulmonis) protein is Probable endonuclease 4.